The chain runs to 220 residues: Deoxyribose-phosphate aldolase (220 aa).

Asp-89 functions as the Proton donor/acceptor in the catalytic mechanism. Residue Lys-151 is the Schiff-base intermediate with acetaldehyde of the active site. Lys-180 serves as the catalytic Proton donor/acceptor.

It belongs to the DeoC/FbaB aldolase family. DeoC type 1 subfamily.

Its subcellular location is the cytoplasm. The enzyme catalyses 2-deoxy-D-ribose 5-phosphate = D-glyceraldehyde 3-phosphate + acetaldehyde. It participates in carbohydrate degradation; 2-deoxy-D-ribose 1-phosphate degradation; D-glyceraldehyde 3-phosphate and acetaldehyde from 2-deoxy-alpha-D-ribose 1-phosphate: step 2/2. Catalyzes a reversible aldol reaction between acetaldehyde and D-glyceraldehyde 3-phosphate to generate 2-deoxy-D-ribose 5-phosphate. The polypeptide is Deoxyribose-phosphate aldolase (Streptococcus pneumoniae (strain Taiwan19F-14)).